Consider the following 67-residue polypeptide: DNA-directed RNA polymerase subunit omega (67 aa).

This sequence belongs to the RNA polymerase subunit omega family. In terms of assembly, RNAP is composed of a core of 2 alpha, a beta and a beta' subunit. The core is associated with a delta subunit, and at least one of epsilon or omega. When a sigma factor is associated with the core the holoenzyme is formed, which can initiate transcription.

The enzyme catalyses RNA(n) + a ribonucleoside 5'-triphosphate = RNA(n+1) + diphosphate. Promotes RNA polymerase assembly. Latches the N- and C-terminal regions of the beta' subunit thereby facilitating its interaction with the beta and alpha subunits. In vitro reconstitution experiments this subunit is dispensible. The chain is DNA-directed RNA polymerase subunit omega (rpoZ) from Bacillus subtilis (strain 168).